We begin with the raw amino-acid sequence, 429 residues long: Putative pentatricopeptide repeat-containing protein At1g03510 (429 aa).

10 PPR repeats span residues 11 to 45, 47 to 81, 82 to 112, 113 to 147, 148 to 180, 181 to 215, 216 to 246, 247 to 281, 282 to 312, and 318 to 348; these read KLIS…FALP, DAHV…NFLS, NPFV…IPQR, NAVV…PNES, SFNA…RFKP, NLIT…LIEP, HPQL…MEDR, DVVA…KVTP, DDIA…MQGD, and SKDH…MPEK. The type E motif stretch occupies residues 353 to 428; that stretch reads TWGALLGACR…SPGSSWCLFK (76 aa).

The protein belongs to the PPR family. PCMP-E subfamily.

The polypeptide is Putative pentatricopeptide repeat-containing protein At1g03510 (PCMP-E3) (Arabidopsis thaliana (Mouse-ear cress)).